The chain runs to 295 residues: ATP synthase gamma chain (295 aa).

Belongs to the ATPase gamma chain family. F-type ATPases have 2 components, CF(1) - the catalytic core - and CF(0) - the membrane proton channel. CF(1) has five subunits: alpha(3), beta(3), gamma(1), delta(1), epsilon(1). CF(0) has three main subunits: a, b and c.

It is found in the cell inner membrane. In terms of biological role, produces ATP from ADP in the presence of a proton gradient across the membrane. The gamma chain is believed to be important in regulating ATPase activity and the flow of protons through the CF(0) complex. The chain is ATP synthase gamma chain from Campylobacter fetus subsp. fetus (strain 82-40).